We begin with the raw amino-acid sequence, 111 residues long: Pyrimidine/purine nucleoside phosphorylase 1 (111 aa).

The protein belongs to the nucleoside phosphorylase PpnP family.

The catalysed reaction is a purine D-ribonucleoside + phosphate = a purine nucleobase + alpha-D-ribose 1-phosphate. It carries out the reaction adenosine + phosphate = alpha-D-ribose 1-phosphate + adenine. The enzyme catalyses cytidine + phosphate = cytosine + alpha-D-ribose 1-phosphate. It catalyses the reaction guanosine + phosphate = alpha-D-ribose 1-phosphate + guanine. The catalysed reaction is inosine + phosphate = alpha-D-ribose 1-phosphate + hypoxanthine. It carries out the reaction thymidine + phosphate = 2-deoxy-alpha-D-ribose 1-phosphate + thymine. The enzyme catalyses uridine + phosphate = alpha-D-ribose 1-phosphate + uracil. It catalyses the reaction xanthosine + phosphate = alpha-D-ribose 1-phosphate + xanthine. Its function is as follows. Catalyzes the phosphorolysis of diverse nucleosides, yielding D-ribose 1-phosphate and the respective free bases. Can use uridine, adenosine, guanosine, cytidine, thymidine, inosine and xanthosine as substrates. Also catalyzes the reverse reactions. The polypeptide is Pyrimidine/purine nucleoside phosphorylase 1 (Psychrobacter arcticus (strain DSM 17307 / VKM B-2377 / 273-4)).